Consider the following 98-residue polypeptide: uncharacterized protein (98 aa).

Positions 1 to 21 (MTTSPTTISTTTAATTTTTTP) are enriched in low complexity. The tract at residues 1–26 (MTTSPTTISTTTAATTTTTTPGKGTD) is disordered. A helical transmembrane segment spans residues 29 to 49 (MVYIEAMLFSMLVLILLIIVC).

The protein resides in the host membrane. This is an uncharacterized protein from Equine herpesvirus 2 (strain 86/87) (EHV-2).